The following is a 305-amino-acid chain: Serine/threonine-protein phosphatase PP-X homolog 3 (305 aa).

The Mn(2+) site is built by aspartate 53, histidine 55, aspartate 81, and asparagine 113. The active-site Proton donor is the histidine 114. Mn(2+)-binding residues include histidine 163 and histidine 237.

Belongs to the PPP phosphatase family. PP-4 (PP-X) subfamily. Mn(2+) serves as cofactor.

It catalyses the reaction O-phospho-L-seryl-[protein] + H2O = L-seryl-[protein] + phosphate. The catalysed reaction is O-phospho-L-threonyl-[protein] + H2O = L-threonyl-[protein] + phosphate. This is Serine/threonine-protein phosphatase PP-X homolog 3 (Ppx3) from Paramecium tetraurelia.